A 539-amino-acid chain; its full sequence is CTP synthase (539 aa).

The interval 1–267 (MTKYIFVTGG…DQKVCDFLHL (267 aa)) is amidoligase domain. Serine 13 contributes to the CTP binding site. Residue serine 13 coordinates UTP. 14–19 (SLGKGI) is a binding site for ATP. Position 54 (tyrosine 54) interacts with L-glutamine. Aspartate 71 is a binding site for ATP. Residues aspartate 71 and glutamate 141 each coordinate Mg(2+). CTP is bound by residues 148-150 (DIE), 188-193 (KTKPTQ), and lysine 224. Residues 188-193 (KTKPTQ) and lysine 224 contribute to the UTP site. The Glutamine amidotransferase type-1 domain maps to 294 to 537 (KITLVGKYVE…IGAASGLPAQ (244 aa)). Glycine 356 is a binding site for L-glutamine. Residue cysteine 383 is the Nucleophile; for glutamine hydrolysis of the active site. L-glutamine contacts are provided by residues 384–387 (LGMQ), glutamate 407, and arginine 465. Active-site residues include histidine 510 and glutamate 512.

It belongs to the CTP synthase family. In terms of assembly, homotetramer.

The enzyme catalyses UTP + L-glutamine + ATP + H2O = CTP + L-glutamate + ADP + phosphate + 2 H(+). It carries out the reaction L-glutamine + H2O = L-glutamate + NH4(+). It catalyses the reaction UTP + NH4(+) + ATP = CTP + ADP + phosphate + 2 H(+). It participates in pyrimidine metabolism; CTP biosynthesis via de novo pathway; CTP from UDP: step 2/2. Its activity is regulated as follows. Allosterically activated by GTP, when glutamine is the substrate; GTP has no effect on the reaction when ammonia is the substrate. The allosteric effector GTP functions by stabilizing the protein conformation that binds the tetrahedral intermediate(s) formed during glutamine hydrolysis. Inhibited by the product CTP, via allosteric rather than competitive inhibition. Its function is as follows. Catalyzes the ATP-dependent amination of UTP to CTP with either L-glutamine or ammonia as the source of nitrogen. Regulates intracellular CTP levels through interactions with the four ribonucleotide triphosphates. The protein is CTP synthase of Lactobacillus acidophilus (strain ATCC 700396 / NCK56 / N2 / NCFM).